A 603-amino-acid polypeptide reads, in one-letter code: Glutamyl-tRNA(Gln) amidotransferase subunit E (603 aa).

Belongs to the GatB/GatE family. GatE subfamily. In terms of assembly, heterodimer of GatD and GatE.

The enzyme catalyses L-glutamyl-tRNA(Gln) + L-glutamine + ATP + H2O = L-glutaminyl-tRNA(Gln) + L-glutamate + ADP + phosphate + H(+). Allows the formation of correctly charged Gln-tRNA(Gln) through the transamidation of misacylated Glu-tRNA(Gln) in organisms which lack glutaminyl-tRNA synthetase. The reaction takes place in the presence of glutamine and ATP through an activated gamma-phospho-Glu-tRNA(Gln). The GatDE system is specific for glutamate and does not act on aspartate. This Thermoplasma acidophilum (strain ATCC 25905 / DSM 1728 / JCM 9062 / NBRC 15155 / AMRC-C165) protein is Glutamyl-tRNA(Gln) amidotransferase subunit E.